Here is a 148-residue protein sequence, read N- to C-terminus: Endothelial differentiation-related factor 1 (148 aa).

Position 2 is an N-acetylalanine (Ala2). Residue Ser4 is modified to Phosphoserine. Residue Lys25 is modified to N6-methyllysine. The tract at residues 34–67 (RGEDVETSKKWAAGQNKQHSITKNTAKLDRETEE) is disordered. Residues 37 to 113 (DVETSKKWAA…QVIADYESGR (77 aa)) are interaction with NR5A2, PPARG and NR1H3. Positions 48-58 (QNKQHSITKNT) are enriched in polar residues. The interaction with TBP and NR5A1 stretch occupies residues 69–108 (HHDRVTLEVGKVIQRGRQSKGLTQKDLATKINEKPQVIAD). Positions 81–88 (IQRGRQSK) match the IQ motif motif. The region spanning 81–135 (IQRGRQSKGLTQKDLATKINEKPQVIADYESGRAIPNNQVLGKIERAIGLKLRGK) is the HTH cro/C1-type domain. The H-T-H motif DNA-binding region spans 92–111 (QKDLATKINEKPQVIADYES).

Interacts with TBP and the transcription factor IID (TFIID) complex, NR5A2, NR1H3 and PPARG. Interaction with TBP is regulated by phosphorylation. Binds NR5A1, ATF1, FOS and JUN via their conserved basic region. Binding to calmodulin is regulated by calcium and phosphorylation of the IQ motif. Post-translationally, phosphorylated. As to expression, expressed in brain, liver, kidney and heart (at protein level). Also expressed in testis.

The protein localises to the cytoplasm. Its subcellular location is the nucleus. In terms of biological role, transcriptional coactivator stimulating NR5A1 and ligand-dependent NR1H3/LXRA and PPARG transcriptional activities. Enhances the DNA-binding activity of ATF1, ATF2, CREB1 and NR5A1. Regulates nitric oxid synthase activity probably by sequestering calmodulin in the cytoplasm. Might function in endothelial cells differentiation, hormone-induced cardiomyocytes hypertrophy and lipid metabolism. In Mus musculus (Mouse), this protein is Endothelial differentiation-related factor 1 (Edf1).